A 166-amino-acid polypeptide reads, in one-letter code: Small ribosomal subunit protein uS5 (166 aa).

The S5 DRBM domain maps to 11–74; it reads LQEKLIAVNR…EQAKRNLNKV (64 aa).

It belongs to the universal ribosomal protein uS5 family. As to quaternary structure, part of the 30S ribosomal subunit. Contacts proteins S4 and S8.

Its function is as follows. With S4 and S12 plays an important role in translational accuracy. Functionally, located at the back of the 30S subunit body where it stabilizes the conformation of the head with respect to the body. This chain is Small ribosomal subunit protein uS5, found in Aeromonas hydrophila subsp. hydrophila (strain ATCC 7966 / DSM 30187 / BCRC 13018 / CCUG 14551 / JCM 1027 / KCTC 2358 / NCIMB 9240 / NCTC 8049).